A 544-amino-acid chain; its full sequence is NEDD4-binding protein 3 (544 aa).

4 disordered regions span residues 61–84 (LPKK…ADYA), 116–252 (SVFK…EFSC), 335–365 (KELR…PEEE), and 430–465 (QEQA…RDSA). A Phosphoserine modification is found at Ser-176. The segment covering 186-222 (PSLSDSSSGGSFGRSPGTGPSPFSSSLGHLNHLGGSL) has biased composition (low complexity). Residues 294 to 530 (LAELKRLYVE…LEQELRALRE (237 aa)) adopt a coiled-coil conformation.

Belongs to the N4BP3 family. Binds NEDD4. Interacts with 14-3-3 proteins. Interacts with MAVS.

The protein localises to the cytoplasmic vesicle. The protein resides in the cell projection. It localises to the axon. It is found in the dendrite. In terms of biological role, plays a positive role in the antiviral innate immune signaling pathway. Mechanistically, interacts with MAVS and functions as a positive regulator to promote 'Lys-63'-linked polyubiquitination of MAVS and thus strengthens the interaction between MAVS and TRAF2. Also plays a role in axon and dendrite arborization during cranial nerve development. May also be important for neural crest migration and early development of other anterior structures including eye, brain and cranial cartilage. The protein is NEDD4-binding protein 3 (N4BP3) of Homo sapiens (Human).